The chain runs to 63 residues: Small ribosomal subunit protein eS31 (63 aa).

Residues C31, C34, C50, and C53 each coordinate Zn(2+).

It belongs to the eukaryotic ribosomal protein eS31 family. As to quaternary structure, part of the 30S ribosomal subunit. Zn(2+) is required as a cofactor.

In Aeropyrum pernix (strain ATCC 700893 / DSM 11879 / JCM 9820 / NBRC 100138 / K1), this protein is Small ribosomal subunit protein eS31 (rps27ae).